Reading from the N-terminus, the 107-residue chain is MYAVFMSGGKQYRVKKNQIIQLEKLNNSPGSIIEFDKILMISAKKEVKIGEPFLKGTKIKAHVENHGRLKKIKIIKFNRRKHYKKKQGHRQYFTNVKILDINNFNGK.

The protein belongs to the bacterial ribosomal protein bL21 family. Part of the 50S ribosomal subunit. Contacts protein L20.

Functionally, this protein binds to 23S rRNA in the presence of protein L20. This chain is Large ribosomal subunit protein bL21, found in Buchnera aphidicola subsp. Schizaphis graminum (strain Sg).